A 348-amino-acid polypeptide reads, in one-letter code: Fe-S cluster assembly protein DRE2 (348 aa).

An N-terminal SAM-like domain region spans residues 1–162; that stretch reads MSQYKTGLLL…KKASSSTSNL (162 aa). A disordered region spans residues 137–170; the sequence is KTNNTKLQSGSKLPTFKKASSSTSNLPSFKKADH. Residues 144 to 163 show a composition bias toward polar residues; the sequence is QSGSKLPTFKKASSSTSNLP. The interval 163-242 is linker; the sequence is PSFKKADHSR…EEELIDEDGS (80 aa). Ser-206 is modified (phosphoserine). The [2Fe-2S] cluster site is built by Cys-252, Cys-263, Cys-266, and Cys-268. Residues 252–268 are fe-S binding site A; that stretch reads CGKSKTKKKKACKDCTC. The [4Fe-4S] cluster site is built by Cys-311, Cys-314, Cys-322, and Cys-325. 2 consecutive short sequence motifs (cx2C motif) follow at residues 311–314 and 322–325; these read CGSC and CSGC. Residues 311-325 form a fe-S binding site B region; the sequence is CGSCSLGDAFRCSGC.

It belongs to the anamorsin family. As to quaternary structure, monomer. Interacts with TAH18. Interacts with MIA40. Requires [2Fe-2S] cluster as cofactor. [4Fe-4S] cluster serves as cofactor.

The protein localises to the cytoplasm. Its subcellular location is the mitochondrion intermembrane space. Its function is as follows. Component of the cytosolic iron-sulfur (Fe-S) protein assembly (CIA) machinery required for the maturation of extramitochondrial Fe-S proteins. Part of an electron transfer chain functioning in an early step of cytosolic Fe-S biogenesis, facilitating the de novo assembly of a [4Fe-4S] cluster on the scaffold complex CFD1-NBP35. Electrons are transferred to DRE2 from NADPH via the FAD- and FMN-containing protein TAH18. TAH18-DRE2 are also required for the assembly of the diferric tyrosyl radical cofactor of ribonucleotide reductase (RNR), probably by providing electrons for reduction during radical cofactor maturation in the catalytic small subunit RNR2. The sequence is that of Fe-S cluster assembly protein DRE2 from Saccharomyces cerevisiae (strain Lalvin EC1118 / Prise de mousse) (Baker's yeast).